A 199-amino-acid chain; its full sequence is Holliday junction branch migration complex subunit RuvA (199 aa).

The interval 1-64 is domain I; that stretch reads MIGRLRGILL…DDAHLLYAFA (64 aa). Positions 65-143 are domain II; that stretch reads SEKERGLFRS…DMPESGVAGM (79 aa). The interval 144–150 is flexible linker; the sequence is RPDRVDG. Residues 151 to 199 form a domain III region; sequence SAPGTVAEAVSALVALGYKPNEASRAVRRLDTEALTTEEIIRQALQRML.

Belongs to the RuvA family. Homotetramer. Forms an RuvA(8)-RuvB(12)-Holliday junction (HJ) complex. HJ DNA is sandwiched between 2 RuvA tetramers; dsDNA enters through RuvA and exits via RuvB. An RuvB hexamer assembles on each DNA strand where it exits the tetramer. Each RuvB hexamer is contacted by two RuvA subunits (via domain III) on 2 adjacent RuvB subunits; this complex drives branch migration. In the full resolvosome a probable DNA-RuvA(4)-RuvB(12)-RuvC(2) complex forms which resolves the HJ.

Its subcellular location is the cytoplasm. In terms of biological role, the RuvA-RuvB-RuvC complex processes Holliday junction (HJ) DNA during genetic recombination and DNA repair, while the RuvA-RuvB complex plays an important role in the rescue of blocked DNA replication forks via replication fork reversal (RFR). RuvA specifically binds to HJ cruciform DNA, conferring on it an open structure. The RuvB hexamer acts as an ATP-dependent pump, pulling dsDNA into and through the RuvAB complex. HJ branch migration allows RuvC to scan DNA until it finds its consensus sequence, where it cleaves and resolves the cruciform DNA. The chain is Holliday junction branch migration complex subunit RuvA from Nitrosococcus oceani (strain ATCC 19707 / BCRC 17464 / JCM 30415 / NCIMB 11848 / C-107).